Here is a 343-residue protein sequence, read N- to C-terminus: Flavone 3'-O-methyltransferase OMT2 (343 aa).

Asn-107 provides a ligand contact to (E)-ferulate. Residues Gly-184, Asp-207, Asp-227, Met-228, Met-240, and Lys-241 each contribute to the S-adenosyl-L-homocysteine site. His-245 serves as the catalytic Proton acceptor. (E)-5-hydroxyferulate is bound at residue Asp-246. Active-site residues include Glu-273 and Glu-305.

Belongs to the class I-like SAM-binding methyltransferase superfamily. Cation-independent O-methyltransferase family. COMT subfamily. As to quaternary structure, homodimer.

It carries out the reaction (E)-5-hydroxyferulate + S-adenosyl-L-methionine = (E)-sinapate + S-adenosyl-L-homocysteine + H(+). The enzyme catalyses luteolin + S-adenosyl-L-methionine = chrysoeriol + S-adenosyl-L-homocysteine + H(+). The catalysed reaction is quercetin + S-adenosyl-L-methionine = isorhamnetin + S-adenosyl-L-homocysteine + H(+). It catalyses the reaction (E)-caffeate + S-adenosyl-L-methionine = (E)-ferulate + S-adenosyl-L-homocysteine + H(+). It carries out the reaction a 3'-hydroxyflavone + S-adenosyl-L-methionine = a 3'-methoxyflavone + S-adenosyl-L-homocysteine + H(+). The protein operates within flavonoid metabolism. Functionally, catalyzes the 3'-O-methylation of the flavonoids luteolin and quercetin. Catalyzes the 3- of 5-O-methylation of the phenylpropanoids caffeate and 5-hydroxyferulate. Substrate preference is 5-hydroxyferulate &gt; luteolin &gt; quercetin &gt; caffeate. Apigenin, kempferol and 3,4-dimethylquercetin do not seem to be substrates for methylation. The polypeptide is Flavone 3'-O-methyltransferase OMT2 (Chrysosplenium americanum (American golden saxifrage)).